A 959-amino-acid polypeptide reads, in one-letter code: General transcription factor II-I repeat domain-containing protein 1 (959 aa).

Glycyl lysine isopeptide (Lys-Gly) (interchain with G-Cter in SUMO2) cross-links involve residues Lys-27 and Lys-94. The segment covering 96–106 (PEAEHPKKVQR) has biased composition (basic and acidic residues). The tract at residues 96–117 (PEAEHPKKVQRGEGGGRSLPRS) is disordered. One copy of the GTF2I-like 1 repeat lies at 119–213 (LEHGSDVYLL…LEDGGRDSKA (95 aa)). Residues Lys-184, Lys-212, Lys-225, Lys-238, Lys-271, Lys-294, Lys-308, Lys-337, Lys-436, Lys-439, and Lys-443 each participate in a glycyl lysine isopeptide (Lys-Gly) (interchain with G-Cter in SUMO2) cross-link. Residues 230 to 250 (CGLHGQAPKVPPQDLPPTATS) form a disordered region. The GTF2I-like 2 repeat unit spans residues 342–436 (IKETEDINTL…FDERIFTGNK (95 aa)). At Ser-448 the chain carries Phosphoserine. Residues 468–492 (NARSDKGSMSEDCGPGTSGELGGLR) are disordered. The stretch at 556–650 (DSHGDVIRPL…ELLTEGVKEP (95 aa)) is one GTF2I-like 3 repeat. Residues Lys-567, Lys-579, Lys-588, Lys-622, Lys-638, and Lys-648 each participate in a glycyl lysine isopeptide (Lys-Gly) (interchain with G-Cter in SUMO2) cross-link. Ser-654 carries the phosphoserine modification. A disordered region spans residues 654–679 (SQGTASSLGFSPPALPPERDSGDPLV). Glycyl lysine isopeptide (Lys-Gly) (interchain with G-Cter in SUMO2) cross-links involve residues Pro-669, Pro-670, Asp-680, and Lys-684. At Gln-686 the chain carries Phosphoserine. GTF2I-like repeat units lie at residues 696-790 (LSRI…KPDE) and 793-887 (ANRL…ICND). Glycyl lysine isopeptide (Lys-Gly) (interchain with G-Cter in SUMO2) cross-links involve residues Ile-701, Lys-724, Lys-732, Lys-772, Lys-774, Lys-787, Lys-829, Lys-889, and Lys-893. The disordered stretch occupies residues 892 to 927 (AKDSSIPKRKRKRVSEGNSVSSSSSSSSSSSSNPDS). The Nuclear localization signal motif lies at 898 to 905 (PKRKRKRV). Low complexity predominate over residues 910 to 923 (SVSSSSSSSSSSSS).

The protein belongs to the TFII-I family. In terms of assembly, interacts with the retinoblastoma protein (RB1) via its C-terminus. In terms of tissue distribution, highly expressed in adult skeletal muscle, heart, fibroblast, bone and fetal tissues. Expressed at lower levels in all other tissues tested.

Its subcellular location is the nucleus. May be a transcription regulator involved in cell-cycle progression and skeletal muscle differentiation. May repress GTF2I transcriptional functions, by preventing its nuclear residency, or by inhibiting its transcriptional activation. May contribute to slow-twitch fiber type specificity during myogenesis and in regenerating muscles. Binds troponin I slow-muscle fiber enhancer (USE B1). Binds specifically and with high affinity to the EFG sequences derived from the early enhancer of HOXC8. The protein is General transcription factor II-I repeat domain-containing protein 1 (GTF2IRD1) of Homo sapiens (Human).